A 186-amino-acid polypeptide reads, in one-letter code: ATP synthase subunit delta (186 aa).

The protein belongs to the ATPase delta chain family. As to quaternary structure, F-type ATPases have 2 components, F(1) - the catalytic core - and F(0) - the membrane proton channel. F(1) has five subunits: alpha(3), beta(3), gamma(1), delta(1), epsilon(1). CF(0) has four main subunits: a(1), b(1), b'(1) and c(10-14). The alpha and beta chains form an alternating ring which encloses part of the gamma chain. F(1) is attached to F(0) by a central stalk formed by the gamma and epsilon chains, while a peripheral stalk is formed by the delta, b and b' chains.

The protein resides in the cell inner membrane. In terms of biological role, f(1)F(0) ATP synthase produces ATP from ADP in the presence of a proton or sodium gradient. F-type ATPases consist of two structural domains, F(1) containing the extramembraneous catalytic core and F(0) containing the membrane proton channel, linked together by a central stalk and a peripheral stalk. During catalysis, ATP synthesis in the catalytic domain of F(1) is coupled via a rotary mechanism of the central stalk subunits to proton translocation. This protein is part of the stalk that links CF(0) to CF(1). It either transmits conformational changes from CF(0) to CF(1) or is implicated in proton conduction. This is ATP synthase subunit delta from Bradyrhizobium sp. (strain ORS 278).